The following is a 299-amino-acid chain: Transcription elongation factor A protein 2 (299 aa).

Residues glutamate 5–serine 82 enclose the TFIIS N-terminal domain. Lysine 57 participates in a covalent cross-link: Glycyl lysine isopeptide (Lys-Gly) (interchain with G-Cter in ubiquitin). Serine 59 and serine 100 each carry phosphoserine. The segment at serine 82–threonine 127 is disordered. Residues arginine 87–lysine 101 show a composition bias toward polar residues. Positions aspartate 102–proline 116 are enriched in basic and acidic residues. Residues valine 138–threonine 254 enclose the TFIIS central domain. Residues aspartate 257–lysine 297 form a TFIIS-type zinc finger. The Zn(2+) site is built by cysteine 261, cysteine 264, cysteine 289, and cysteine 292.

Belongs to the TFS-II family. As to quaternary structure, interacts with the basal transcription factor GTF2B. Interacts with REXO1. Testis and ovary specific. Specific to testicular germ cells.

Its subcellular location is the nucleus. Functionally, necessary for efficient RNA polymerase II transcription elongation past template-encoded arresting sites. The arresting sites in DNA have the property of trapping a certain fraction of elongating RNA polymerases that pass through, resulting in locked ternary complexes. Cleavage of the nascent transcript by S-II allows the resumption of elongation from the new 3'-terminus. The sequence is that of Transcription elongation factor A protein 2 (Tcea2) from Mus musculus (Mouse).